Consider the following 884-residue polypeptide: E3 ubiquitin-protein ligase BRE1-like 1 (884 aa).

The tract at residues 1 to 37 (MGSTGEPDRKRRLSSSVAPGGGAPVSPAKRLAVAPTS) is disordered. Positions 49–86 (YKNQKLSEQLEAHKFEYRALENKFAGLKEKQRTHNETL) form a coiled coil. Residues 107 to 127 (KSGSPNSSPGSGHNNVQKDGT) are disordered. The span at 108–121 (SGSPNSSPGSGHNN) shows a compositional bias: low complexity. Coiled-coil stretches lie at residues 216-541 (LNNV…ELKL), 580-663 (SKLE…LQQI), 696-762 (RNLQ…QSLD), and 789-827 (KKRI…KEYR). Residues 832–871 (CGICHDRQKEVVITKCYHLFCNQCIQKSLGNRQRRCPSCS) form an RING-type zinc finger.

It belongs to the BRE1 family. In terms of assembly, interacts with SKIPA. Interacts with HUB2.

The protein localises to the nucleus. The enzyme catalyses S-ubiquitinyl-[E2 ubiquitin-conjugating enzyme]-L-cysteine + [acceptor protein]-L-lysine = [E2 ubiquitin-conjugating enzyme]-L-cysteine + N(6)-ubiquitinyl-[acceptor protein]-L-lysine.. Its pathway is protein modification; protein ubiquitination. In terms of biological role, E3 ubiquitin-protein ligase that monoubiquitinates H2B to form H2BK143ub1. H2BK143ub1 gives a specific tag for epigenetic transcriptional activation and is a prerequisite for H3 Lys-4 methylation (H3K4me). It thereby plays a central role in histone code and gene regulation. H2B monoubiquitination (H2BK143ub1), mediated by HUB1, modulates transcriptional regulation of anther development, likely by promoting histone H3K4 dimethylation (H3K4me2) in the chromatin of the key tapetum degradation-related genes C4, CP1 and UDT1. The sequence is that of E3 ubiquitin-protein ligase BRE1-like 1 from Oryza sativa subsp. japonica (Rice).